The primary structure comprises 1942 residues: GREB1-like protein (1942 aa).

Disordered regions lie at residues 76–101 (SSNS…YLQG), 235–306 (PFSN…GTKT), 325–373 (MDGR…HRSW), and 1123–1256 (TKTA…RTQV). Residues 81–90 (EDMDDEDDSD) are compositionally biased toward acidic residues. Positions 237-253 (SNSASSSKPSSSSSLSS) are enriched in low complexity. Residues 338 to 362 (NPLSTPSHGYRTTETGDSPASTAMS) show a composition bias toward polar residues. Positions 1127–1155 (TSREERPREGERSSGETAEHDDLPMELER) are enriched in basic and acidic residues. Residues 1158 to 1171 (SNASAATRTSGSTT) show a composition bias toward low complexity. Residues 1172–1202 (ENGVSSSSILDKPSSQSDPCGSRTMMDSCSS) show a composition bias toward polar residues. Positions 1212–1248 (SQAPSSSSTSSFSSASSSSSSSSSPAAQRPSQSTQAP) are enriched in low complexity. The helical transmembrane segment at 1861-1881 (GVIFSGLLLYLCDSFVVSSLL) threads the bilayer.

The protein belongs to the GREB1 family.

Its subcellular location is the membrane. In terms of biological role, plays a major role in early metanephros development. The protein is GREB1-like protein (greb1l) of Danio rerio (Zebrafish).